The sequence spans 164 residues: Ribosome-binding factor A (164 aa).

Belongs to the RbfA family. As to quaternary structure, monomer. Binds 30S ribosomal subunits, but not 50S ribosomal subunits or 70S ribosomes.

Its subcellular location is the cytoplasm. Its function is as follows. One of several proteins that assist in the late maturation steps of the functional core of the 30S ribosomal subunit. Associates with free 30S ribosomal subunits (but not with 30S subunits that are part of 70S ribosomes or polysomes). Required for efficient processing of 16S rRNA. May interact with the 5'-terminal helix region of 16S rRNA. In Caulobacter sp. (strain K31), this protein is Ribosome-binding factor A.